The primary structure comprises 557 residues: 2-isopropylmalate synthase (557 aa).

The 275-residue stretch at 33-307 folds into the Pyruvate carboxyltransferase domain; sequence PIWCSSDLRD…DPQLDFSDID (275 aa). Mg(2+)-binding residues include D42, H246, H248, and N282. The tract at residues 439 to 557 is regulatory domain; sequence ANSPYALVSH…SLSQQEAKAA (119 aa).

This sequence belongs to the alpha-IPM synthase/homocitrate synthase family. LeuA type 2 subfamily. As to quaternary structure, homodimer. It depends on Mg(2+) as a cofactor.

The protein localises to the cytoplasm. The catalysed reaction is 3-methyl-2-oxobutanoate + acetyl-CoA + H2O = (2S)-2-isopropylmalate + CoA + H(+). It functions in the pathway amino-acid biosynthesis; L-leucine biosynthesis; L-leucine from 3-methyl-2-oxobutanoate: step 1/4. Its function is as follows. Catalyzes the condensation of the acetyl group of acetyl-CoA with 3-methyl-2-oxobutanoate (2-ketoisovalerate) to form 3-carboxy-3-hydroxy-4-methylpentanoate (2-isopropylmalate). This chain is 2-isopropylmalate synthase, found in Pseudomonas putida (strain W619).